Consider the following 357-residue polypeptide: F-box only protein 25 (357 aa).

Residues 1–83 (MPFLGQDWRS…NDTNTQCFYR (83 aa)) form an interaction with beta-actin region. Positions 225 to 273 (LTLSDLPVHMLSNILYRFSDGWDIVTLGQVTPTLSALSEDRQLWKKLCQ) constitute an F-box domain.

As to quaternary structure, part of a SCF (SKP1-cullin-F-box) protein ligase complex consisting of FBXO25, SKP1, CUL1 and RBX1. Interacts directly with SKP1 and CUL1. Interacts (via C-terminus) with beta-actin (via N-terminus).

The protein localises to the nucleus. The protein operates within protein modification; protein ubiquitination. In terms of biological role, substrate-recognition component of the SCF (SKP1-CUL1-F-box protein)-type E3 ubiquitin ligase complex. May play a role in accumulation of expanded polyglutamine (polyQ) protein huntingtin (HTT). In Bos taurus (Bovine), this protein is F-box only protein 25 (FBXO25).